A 779-amino-acid polypeptide reads, in one-letter code: Membrane metallo-endopeptidase-like 1 (779 aa).

Residues 1-27 (MGKSEGPVGMVESAGRAGQKRPGFLEG) lie on the Cytoplasmic side of the membrane. The chain crosses the membrane as a helical; Signal-anchor for type II membrane protein span at residues 28–48 (GLLLLLLLVTAALVALGVLYA). Topologically, residues 49-779 (DRRGKQLPRL…MHPKERCRVW (731 aa)) are lumenal. The 692-residue stretch at 88-779 (VCTTPGCVIA…MHPKERCRVW (692 aa)) folds into the Peptidase M13 domain. 5 disulfides stabilise this stretch: cysteine 89/cysteine 94, cysteine 112/cysteine 764, cysteine 120/cysteine 724, cysteine 175/cysteine 439, and cysteine 650/cysteine 776. Arginine 135 contributes to the a peptide binding site. 4 N-linked (GlcNAc...) asparagine glycosylation sites follow: asparagine 177, asparagine 207, asparagine 350, and asparagine 530. Positions 515-560 (LEEMNRRLDEEYSNLNFSEDLYFENSLQNLKVGAQRSLRKLREKVD) form a coiled coil. Zn(2+) is bound at residue histidine 613. The active site involves glutamate 614. Position 617 (histidine 617) interacts with Zn(2+). N-linked (GlcNAc...) asparagine glycosylation occurs at asparagine 657. Glutamate 676 is a Zn(2+) binding site. Aspartate 680 serves as the catalytic Proton donor.

It belongs to the peptidase M13 family. Requires Zn(2+) as cofactor. Post-translationally, N-glycosylated. In terms of tissue distribution, predominantly expressed in testis. Weakly expressed in brain, kidney and heart.

The protein resides in the membrane. It localises to the secreted. The enzyme catalyses Preferential cleavage of polypeptides between hydrophobic residues, particularly with Phe or Tyr at P1'.. Inhibited by thiorphan and phosphoramidon. In terms of biological role, metalloprotease involved in sperm function, possibly by modulating the processes of fertilization and early embryonic development. Degrades a broad variety of small peptides with a preference for peptides shorter than 3 kDa containing neutral bulky aliphatic or aromatic amino acid residues. Shares the same substrate specificity with MME and cleaves peptides at the same amide bond. The protein is Membrane metallo-endopeptidase-like 1 (MMEL1) of Homo sapiens (Human).